A 538-amino-acid chain; its full sequence is Phosphoenolpyruvate carboxykinase (ATP) (538 aa).

Substrate-binding residues include arginine 62, tyrosine 203, and lysine 209. ATP is bound by residues lysine 209, histidine 228, and 244–252 (GLSGTGKTT). Residues lysine 209 and histidine 228 each coordinate Mn(2+). A Mn(2+)-binding site is contributed by aspartate 265. ATP is bound by residues glutamate 293, arginine 329, 445-446 (RI), and threonine 451. Arginine 329 is a binding site for substrate.

Belongs to the phosphoenolpyruvate carboxykinase (ATP) family. Monomer. The cofactor is Mn(2+).

It is found in the cytoplasm. The enzyme catalyses oxaloacetate + ATP = phosphoenolpyruvate + ADP + CO2. Its pathway is carbohydrate biosynthesis; gluconeogenesis. In terms of biological role, involved in the gluconeogenesis. Catalyzes the conversion of oxaloacetate (OAA) to phosphoenolpyruvate (PEP) through direct phosphoryl transfer between the nucleoside triphosphate and OAA. The sequence is that of Phosphoenolpyruvate carboxykinase (ATP) from Haemophilus ducreyi (strain 35000HP / ATCC 700724).